We begin with the raw amino-acid sequence, 1435 residues long: MGASASVLTGSKLDAWEQIRLKPGSKKKYRLKHLVWASRELERFACNPELLETAEGNEKLLQQLEPALKTGSDSLQSLWNAIVVLWCVHNRYKIGDTQQAIQKLKEVMGSRKSADAAKEDTSARQAGQNYPIVSNAQGQMVHQAISPRTLNAWVKAVEEKAFNPEIIPMFMALSEGAISYDINTMLNAIGGHQGALQVLKEVINEEAVEWDRTHPPPVGPLPPGQIREPTGSDIAGTTSTQQEQIHWTTRPNQPIPVGDIYRKWIVLGLNKMVKMYSPVSILDIKQGPKEPFRDYVDRFYKTLRAEQATQEVKNWMTETLLVQNANPDCKQILKSLGPGATLEEMMVACQGVGGPTHKARVLAEAMATAQQDLKGGYTAVFMQRGQNPIRKGTIKCFNCGKEGHIARNCRAPRKKGCWKCGQEGHQMKDCRNGKQFFRQILASGGHEARQLCAETSTPISPTDGGGSEGTGESGTERGPERALSVCLPQIPLWDRPIVTARVGGHLCEVLLDTGADDTVLNNIQLEGKWKPKMIGGIGGFIKVKEYDNVTVEIEGREVQGTVLVGPTPVNIIGRNILTGLGCTLNFPISPIAPVPVKLKPGMDGPKVKQWPLSKEKIEALTAICQEMEQEGKISRIGPENPYNTPIFAIKKKDGTKWRKLVDFRELNKRTQEFWEVQLGIPHPGGLKQKQSVTVLDVGDAYFSCPLDPDFRKYTAFTIPSVNNETPGIRYQYNVLPQGWKGSPAIFQSSMTKILDPFRRDNPELEICQYMDDLYVGSDLPLTEHRKRIELLREHLYQWGFTTPDKKHQKEPPFLWMGYELHPDKWTVQSIQLPNKDVWTVNDIQKLIGKLNWASQIYQGIRVRELCKLIRGTKSLTEVVPLSREAELELEENRERLKQPVHGVYYQPDKDLWVNIQKQGGEQWTYQIYQEEHKNLKTGKYTRQKASHTNDIRQLAEVIQKVSQESIIIWGKLPKFKLPVTRETWETWWADYWQATWIPEWEFVSTPPLIKLWYRLESEPIMGAETYYVDGAANRETKLGKAGYVTEQGKQKIIKLDETTNQKAELMAILLALQDSKETVNIVTDSQYALGVISSQPTQSESPIVQQIIEELTKKEQVYLTWVPAHKGIGGNEKIDKLVSKDIRRVLFLEGIDQAQEDHEKYHSNWKALASEFGLPPVVAKEIIASCPKCHIKGEAIHGQVDCSPEVWQIDCTHMEGKIIIVAVHVASGFIEAEVIPAETGQETAYFLLKLAARWPVKVIHTDNGPNFTSTTMKAACWWANIQHEFGIPYNPQSQGVVEAMNKELKSIIQQVRDQAEHLRTAVQMAVFVHNFKRKGGIGGYTAGERIIDILASQIQTTELQKQILKXHKFRVYYRDSRDPIWKGPAQLLWKGEGAVVIQDKGDIKVVPRRKAKIIREYGKQMAGTDSMASGQTESE.

The N-myristoyl glycine; by host moiety is linked to residue Gly-2. The segment at 7–31 is interaction with Gp41; it reads VLTGSKLDAWEQIRLKPGSKKKYRL. The interval 8 to 43 is interaction with host CALM1; it reads LTGSKLDAWEQIRLKPGSKKKYRLKHLVWASRELER. The tract at residues 12–19 is interaction with host AP3D1; the sequence is KLDAWEQI. An interaction with membrane phosphatidylinositol 4,5-bisphosphate and RNA region spans residues 14–33; sequence DAWEQIRLKPGSKKKYRLKH. The short motif at 16 to 22 is the Nuclear export signal element; the sequence is WEQIRLK. The short motif at 26 to 32 is the Nuclear localization signal element; the sequence is KKKYRLK. Residues 73 to 77 are interaction with membrane phosphatidylinositol 4,5-bisphosphate; it reads DSLQS. Tyr-130 bears the Phosphotyrosine; by host mark. Residues 187-225 form an interaction with human PPIA/CYPA and NUP153 region; the sequence is NAIGGHQGALQVLKEVINEEAVEWDRTHPPPVGPLPPGQ. The segment at 212–232 is disordered; it reads RTHPPPVGPLPPGQIREPTGS. The tract at residues 276–362 is dimerization/Multimerization of capsid protein p24; that stretch reads YSPVSILDIK…GGPTHKARVL (87 aa). CCHC-type zinc fingers lie at residues 394–411 and 415–432; these read IKCFNCGKEGHIARNCRA and KGCWKCGQEGHQMKDCRN. Residues 455–480 are disordered; the sequence is TSTPISPTDGGGSEGTGESGTERGPE. Over residues 463-472 the composition is skewed to gly residues; the sequence is DGGGSEGTGE. The dimerization of protease stretch occupies residues 488-492; it reads PQIPL. The Peptidase A2 domain maps to 507 to 576; it reads CEVLLDTGAD…TPVNIIGRNI (70 aa). Asp-512 functions as the For protease activity; shared with dimeric partner in the catalytic mechanism. 2 dimerization of protease regions span residues 536–542 and 575–587; these read GIGGFIK and NILTGLGCTLNFP. Residues 630 to 820 enclose the Reverse transcriptase domain; that stretch reads EGKISRIGPE…PPFLWMGYEL (191 aa). Residues Asp-696, Asp-771, and Asp-772 each contribute to the Mg(2+) site. Residues 813 to 821 are RT 'primer grip'; it reads FLWMGYELH. Positions 984–1000 match the Tryptophan repeat motif motif; it reads WETWWADYWQATWIPEW. One can recognise an RNase H type-1 domain in the interval 1020-1143; that stretch reads IMGAETYYVD…IDKLVSKDIR (124 aa). Positions 1029, 1064, 1084, and 1135 each coordinate Mg(2+). The Integrase-type zinc-finger motif lies at 1149 to 1190; sequence EGIDQAQEDHEKYHSNWKALASEFGLPPVVAKEIIASCPKCH. The Zn(2+) site is built by His-1158, His-1162, Cys-1186, and Cys-1189. The Integrase catalytic domain maps to 1200–1350; that stretch reads VDCSPEVWQI…TAGERIIDIL (151 aa). Residues Asp-1210, Asp-1262, and Glu-1298 each coordinate Mg(2+). A DNA-binding region (integrase-type) is located at residues 1369-1416; sequence FRVYYRDSRDPIWKGPAQLLWKGEGAVVIQDKGDIKVVPRRKAKIIRE.

As to quaternary structure, homotrimer; further assembles as hexamers of trimers. Interacts with gp41 (via C-terminus). Interacts with host CALM1; this interaction induces a conformational change in the Matrix protein, triggering exposure of the myristate group. Interacts with host AP3D1; this interaction allows the polyprotein trafficking to multivesicular bodies during virus assembly. Part of the pre-integration complex (PIC) which is composed of viral genome, matrix protein, Vpr and integrase. In terms of assembly, homodimer; the homodimer further multimerizes as homohexamers or homopentamers. Interacts with human PPIA/CYPA; This interaction stabilizes the capsid. Interacts with human NUP153. Interacts with host PDZD8; this interaction stabilizes the capsid. Interacts with monkey TRIM5; this interaction destabilizes the capsid. Homodimer, whose active site consists of two apposed aspartic acid residues. As to quaternary structure, heterodimer of p66 RT and p51 RT (RT p66/p51). Heterodimerization of RT is essential for DNA polymerase activity. The overall folding of the subdomains is similar in p66 RT and p51 RT but the spatial arrangements of the subdomains are dramatically different. In terms of assembly, homotetramer; may further associate as a homohexadecamer. Part of the pre-integration complex (PIC) which is composed of viral genome, matrix protein, Vpr and integrase. Interacts with human SMARCB1/INI1 and human PSIP1/LEDGF isoform 1. Interacts with human KPNA3; this interaction might play a role in nuclear import of the pre-integration complex. Interacts with human NUP153; this interaction might play a role in nuclear import of the pre-integration complex. Mg(2+) is required as a cofactor. In terms of processing, specific enzymatic cleavages by the viral protease yield mature proteins. The protease is released by autocatalytic cleavage. The polyprotein is cleaved during and after budding, this process is termed maturation. Proteolytic cleavage of p66 RT removes the RNase H domain to yield the p51 RT subunit. Nucleocapsid protein p7 might be further cleaved after virus entry. Tyrosine phosphorylated presumably in the virion by a host kinase. Phosphorylation is apparently not a major regulator of membrane association. Post-translationally, phosphorylated possibly by host MAPK1; this phosphorylation is necessary for Pin1-mediated virion uncoating. In terms of processing, methylated by host PRMT6, impairing its function by reducing RNA annealing and the initiation of reverse transcription.

It is found in the host cell membrane. The protein resides in the host endosome. The protein localises to the host multivesicular body. Its subcellular location is the virion membrane. It localises to the host nucleus. It is found in the host cytoplasm. The protein resides in the virion. The enzyme catalyses Specific for a P1 residue that is hydrophobic, and P1' variable, but often Pro.. The catalysed reaction is Endohydrolysis of RNA in RNA/DNA hybrids. Three different cleavage modes: 1. sequence-specific internal cleavage of RNA. Human immunodeficiency virus type 1 and Moloney murine leukemia virus enzymes prefer to cleave the RNA strand one nucleotide away from the RNA-DNA junction. 2. RNA 5'-end directed cleavage 13-19 nucleotides from the RNA end. 3. DNA 3'-end directed cleavage 15-20 nucleotides away from the primer terminus.. It catalyses the reaction 3'-end directed exonucleolytic cleavage of viral RNA-DNA hybrid.. It carries out the reaction DNA(n) + a 2'-deoxyribonucleoside 5'-triphosphate = DNA(n+1) + diphosphate. With respect to regulation, protease: The viral protease is inhibited by many synthetic protease inhibitors (PIs), such as amprenavir, atazanavir, indinavir, loprinavir, nelfinavir, ritonavir and saquinavir. Use of protease inhibitors in tritherapy regimens permit more ambitious therapeutic strategies. Reverse transcriptase/ribonuclease H: RT can be inhibited either by nucleoside RT inhibitors (NRTIs) or by non nucleoside RT inhibitors (NNRTIs). NRTIs act as chain terminators, whereas NNRTIs inhibit DNA polymerization by binding a small hydrophobic pocket near the RT active site and inducing an allosteric change in this region. Classical NRTIs are abacavir, adefovir (PMEA), didanosine (ddI), lamivudine (3TC), stavudine (d4T), tenofovir (PMPA), zalcitabine (ddC), and zidovudine (AZT). Classical NNRTIs are atevirdine (BHAP U-87201E), delavirdine, efavirenz (DMP-266), emivirine (I-EBU), and nevirapine (BI-RG-587). The tritherapies used as a basic effective treatment of AIDS associate two NRTIs and one NNRTI. Its function is as follows. Mediates, with Gag polyprotein, the essential events in virion assembly, including binding the plasma membrane, making the protein-protein interactions necessary to create spherical particles, recruiting the viral Env proteins, and packaging the genomic RNA via direct interactions with the RNA packaging sequence (Psi). Gag-Pol polyprotein may regulate its own translation, by the binding genomic RNA in the 5'-UTR. At low concentration, the polyprotein would promote translation, whereas at high concentration, the polyprotein would encapsidate genomic RNA and then shut off translation. In terms of biological role, targets the polyprotein to the plasma membrane via a multipartite membrane-binding signal, that includes its myristoylated N-terminus. Matrix protein is part of the pre-integration complex. Implicated in the release from host cell mediated by Vpu. Binds to RNA. Functionally, forms the conical core that encapsulates the genomic RNA-nucleocapsid complex in the virion. Most core are conical, with only 7% tubular. The core is constituted by capsid protein hexamer subunits. The core is disassembled soon after virion entry. Host restriction factors such as TRIM5-alpha or TRIMCyp bind retroviral capsids and cause premature capsid disassembly, leading to blocks in reverse transcription. Capsid restriction by TRIM5 is one of the factors which restricts HIV-1 to the human species. Host PIN1 apparently facilitates the virion uncoating. On the other hand, interactions with PDZD8 or CYPA stabilize the capsid. Encapsulates and protects viral dimeric unspliced genomic RNA (gRNA). Binds these RNAs through its zinc fingers. Acts as a nucleic acid chaperone which is involved in rearangement of nucleic acid secondary structure during gRNA retrotranscription. Also facilitates template switch leading to recombination. As part of the polyprotein, participates in gRNA dimerization, packaging, tRNA incorporation and virion assembly. Its function is as follows. Aspartyl protease that mediates proteolytic cleavages of Gag and Gag-Pol polyproteins during or shortly after the release of the virion from the plasma membrane. Cleavages take place as an ordered, step-wise cascade to yield mature proteins. This process is called maturation. Displays maximal activity during the budding process just prior to particle release from the cell. Also cleaves Nef and Vif, probably concomitantly with viral structural proteins on maturation of virus particles. Hydrolyzes host EIF4GI and PABP1 in order to shut off the capped cellular mRNA translation. The resulting inhibition of cellular protein synthesis serves to ensure maximal viral gene expression and to evade host immune response. Also mediates cleavage of host YTHDF3. Mediates cleavage of host CARD8, thereby activating the CARD8 inflammasome, leading to the clearance of latent HIV-1 in patient CD4(+) T-cells after viral reactivation; in contrast, HIV-1 can evade CARD8-sensing when its protease remains inactive in infected cells prior to viral budding. In terms of biological role, multifunctional enzyme that converts the viral RNA genome into dsDNA in the cytoplasm, shortly after virus entry into the cell. This enzyme displays a DNA polymerase activity that can copy either DNA or RNA templates, and a ribonuclease H (RNase H) activity that cleaves the RNA strand of RNA-DNA heteroduplexes in a partially processive 3' to 5' endonucleasic mode. Conversion of viral genomic RNA into dsDNA requires many steps. A tRNA(3)-Lys binds to the primer-binding site (PBS) situated at the 5'-end of the viral RNA. RT uses the 3' end of the tRNA primer to perform a short round of RNA-dependent minus-strand DNA synthesis. The reading proceeds through the U5 region and ends after the repeated (R) region which is present at both ends of viral RNA. The portion of the RNA-DNA heteroduplex is digested by the RNase H, resulting in a ssDNA product attached to the tRNA primer. This ssDNA/tRNA hybridizes with the identical R region situated at the 3' end of viral RNA. This template exchange, known as minus-strand DNA strong stop transfer, can be either intra- or intermolecular. RT uses the 3' end of this newly synthesized short ssDNA to perform the RNA-dependent minus-strand DNA synthesis of the whole template. RNase H digests the RNA template except for two polypurine tracts (PPTs) situated at the 5'-end and near the center of the genome. It is not clear if both polymerase and RNase H activities are simultaneous. RNase H probably can proceed both in a polymerase-dependent (RNA cut into small fragments by the same RT performing DNA synthesis) and a polymerase-independent mode (cleavage of remaining RNA fragments by free RTs). Secondly, RT performs DNA-directed plus-strand DNA synthesis using the PPTs that have not been removed by RNase H as primers. PPTs and tRNA primers are then removed by RNase H. The 3' and 5' ssDNA PBS regions hybridize to form a circular dsDNA intermediate. Strand displacement synthesis by RT to the PBS and PPT ends produces a blunt ended, linear dsDNA copy of the viral genome that includes long terminal repeats (LTRs) at both ends. Functionally, catalyzes viral DNA integration into the host chromosome, by performing a series of DNA cutting and joining reactions. This enzyme activity takes place after virion entry into a cell and reverse transcription of the RNA genome in dsDNA. The first step in the integration process is 3' processing. This step requires a complex comprising the viral genome, matrix protein, Vpr and integrase. This complex is called the pre-integration complex (PIC). The integrase protein removes 2 nucleotides from each 3' end of the viral DNA, leaving recessed CA OH's at the 3' ends. In the second step, the PIC enters cell nucleus. This process is mediated through integrase and Vpr proteins, and allows the virus to infect a non dividing cell. This ability to enter the nucleus is specific of lentiviruses, other retroviruses cannot and rely on cell division to access cell chromosomes. In the third step, termed strand transfer, the integrase protein joins the previously processed 3' ends to the 5' ends of strands of target cellular DNA at the site of integration. The 5'-ends are produced by integrase-catalyzed staggered cuts, 5 bp apart. A Y-shaped, gapped, recombination intermediate results, with the 5'-ends of the viral DNA strands and the 3' ends of target DNA strands remaining unjoined, flanking a gap of 5 bp. The last step is viral DNA integration into host chromosome. This involves host DNA repair synthesis in which the 5 bp gaps between the unjoined strands are filled in and then ligated. Since this process occurs at both cuts flanking the HIV genome, a 5 bp duplication of host DNA is produced at the ends of HIV-1 integration. Alternatively, Integrase may catalyze the excision of viral DNA just after strand transfer, this is termed disintegration. This Human immunodeficiency virus type 1 group O (isolate ANT70) (HIV-1) protein is Gag-Pol polyprotein (gag-pol).